The sequence spans 917 residues: Auxin response factor 17 (917 aa).

The segment at residues 134–236 is a DNA-binding region (TF-B3); the sequence is FCKTLTASDT…QLLLGIRRAN (103 aa). The segment at 571-649 is disordered; it reads SVPNALSPFS…RPTAVPVPDP (79 aa). Low complexity-rich tracts occupy residues 576-594 and 604-620; these read LSPF…MTLQ and SYPD…NTST. The region spanning 786–870 is the PB1 domain; the sequence is ATFVKVYKSG…SCIKILSPQE (85 aa).

It belongs to the ARF family. Homodimers and heterodimers.

The protein resides in the nucleus. In terms of biological role, auxin response factors (ARFs) are transcriptional factors that bind specifically to the DNA sequence 5'-TGTCTC-3' found in the auxin-responsive promoter elements (AuxREs). The polypeptide is Auxin response factor 17 (ARF17) (Oryza sativa subsp. indica (Rice)).